The sequence spans 238 residues: Peroxisomal coenzyme A diphosphatase NUDT7 (238 aa).

Residue Lys-20 is modified to N6-succinyllysine. In terms of domain architecture, Nudix hydrolase spans 37–172 (YNKYSVLLPL…VTRLGHRFIN (136 aa)). Residues 77-98 (KRDPTDMDDAATALREAQEEVG) carry the Nudix box motif. Mg(2+) is bound by residues Glu-92 and Glu-96. The Microbody targeting signal signature appears at 236–238 (SRL).

It belongs to the Nudix hydrolase family. PCD1 subfamily. Monomer. It depends on Mn(2+) as a cofactor. Mg(2+) is required as a cofactor. In terms of tissue distribution, expressed in liver, kidney, pancreas, pituitary, small intestine, spleen, heart and placenta. Weakly expressed in brain.

It is found in the peroxisome. The catalysed reaction is hexanoyl-CoA + H2O = hexanoyl-4'-phosphopantetheine + adenosine 3',5'-bisphosphate + 2 H(+). It carries out the reaction octanoyl-CoA + H2O = S-octanoyl-4'-phosphopantetheine + adenosine 3',5'-bisphosphate + 2 H(+). It catalyses the reaction butanoyl-CoA + H2O = S-butanoyl-4'-phosphopantetheine + adenosine 3',5'-bisphosphate + 2 H(+). The enzyme catalyses decanoyl-CoA + H2O = decanoyl-4'-phosphopantetheine + adenosine 3',5'-bisphosphate + 2 H(+). The catalysed reaction is dodecanoyl-CoA + H2O = S-dodecanoyl-4'-phosphopantetheine + adenosine 3',5'-bisphosphate + 2 H(+). It carries out the reaction tetradecanoyl-CoA + H2O = tetradecanoyl-4'-phosphopantetheine + adenosine 3',5'-bisphosphate + 2 H(+). It catalyses the reaction choloyl-CoA + H2O = S-choloyl-4'-phosphopantetheine + adenosine 3',5'-bisphosphate + 2 H(+). The enzyme catalyses 3alpha,7alpha,12alpha-trihydroxy-5beta-cholestan-26-oyl-CoA + H2O = 3alpha,7alpha,12alpha-trihydroxy-5beta-cholestan-26-oyl-4'-phosphopantetheine + adenosine 3',5'-bisphosphate + 2 H(+). The catalysed reaction is acetyl-CoA + H2O = S-acetyl-4'-phosphopantetheine + adenosine 3',5'-bisphosphate + 2 H(+). It carries out the reaction CoA + H2O = (R)-4'-phosphopantetheine + adenosine 3',5'-bisphosphate + 2 H(+). It catalyses the reaction propanoyl-CoA + H2O = propanoyl-4'-phosphopantetheine + adenosine 3',5'-bisphosphate + 2 H(+). The enzyme catalyses malonyl-CoA + H2O = malonyl-4'-phosphopantetheine + adenosine 3',5'-bisphosphate + 2 H(+). The catalysed reaction is succinyl-CoA + H2O = succinyl-4'-phosphopantetheine + adenosine 3',5'-bisphosphate + 2 H(+). It carries out the reaction a 5'-end CoA-ribonucleoside in mRNA + H2O = a 5'-end phospho-adenosine-phospho-ribonucleoside in mRNA + (R)-4'-phosphopantetheine + 2 H(+). Inhibited by fluoride. Functionally, fatty acyl-coenzyme A (CoA) diphosphatase that hydrolyzes fatty acyl-CoA to yield acyl-4'-phosphopantetheine and adenosine 3',5'-bisphosphate. Cleaves CoA, CoA esters and oxidized CoA with similar efficiencies. Preferentially hydrolyzes medium-chain acyl-CoAs and bile acid-CoAs. Has no activity toward NDP-sugars, CDP-alcohols, (deoxy)nucleoside 5'-triphosphates, nucleoside 5'-di or monophosphates, diadenosine polyphosphates, NAD, NADH, NADP, NADPH or thymidine-5'-monophospho-p-nitrophenyl ester. May be required to eliminate oxidized CoA from peroxisomes, or regulate CoA and acyl-CoA levels in this organelle in response to metabolic demand. Does not play a role in U8 snoRNA decapping activity. Binds U8 snoRNA. Exhibits decapping activity towards dpCoA-capped RNAs in vitro. The chain is Peroxisomal coenzyme A diphosphatase NUDT7 from Homo sapiens (Human).